The chain runs to 861 residues: DNA mismatch repair protein MutS (861 aa).

613–620 (GPNMGGKS) is a binding site for ATP.

Belongs to the DNA mismatch repair MutS family.

In terms of biological role, this protein is involved in the repair of mismatches in DNA. It is possible that it carries out the mismatch recognition step. This protein has a weak ATPase activity. This is DNA mismatch repair protein MutS from Dichelobacter nodosus (strain VCS1703A).